The following is a 445-amino-acid chain: Fasciclin-like arabinogalactan protein 16 (445 aa).

Positions 1–23 (MDSSYGATKFLLLLFLTTSIATA) are cleaved as a signal peptide. 2 FAS1 domains span residues 35–173 (NSNS…ERLL) and 257–400 (VKDF…DGVL). N-linked (GlcNAc...) asparagine glycosylation is found at Asn-72 and Asn-279.

Belongs to the fasciclin-like AGP family.

It localises to the secreted. Functionally, may be a cell surface adhesion protein. This chain is Fasciclin-like arabinogalactan protein 16 (FLA16), found in Arabidopsis thaliana (Mouse-ear cress).